Consider the following 286-residue polypeptide: Pantothenate synthetase (286 aa).

30-37 (MGFLHEGH) serves as a coordination point for ATP. The Proton donor role is filled by His-37. Gln-61 contributes to the (R)-pantoate binding site. Beta-alanine is bound at residue Gln-61. 147–150 (GLKD) is an ATP binding site. Gln-153 contributes to the (R)-pantoate binding site. Residues Val-176 and 184–187 (KSSR) each bind ATP.

This sequence belongs to the pantothenate synthetase family. In terms of assembly, homodimer.

It is found in the cytoplasm. The catalysed reaction is (R)-pantoate + beta-alanine + ATP = (R)-pantothenate + AMP + diphosphate + H(+). The protein operates within cofactor biosynthesis; (R)-pantothenate biosynthesis; (R)-pantothenate from (R)-pantoate and beta-alanine: step 1/1. In terms of biological role, catalyzes the condensation of pantoate with beta-alanine in an ATP-dependent reaction via a pantoyl-adenylate intermediate. This is Pantothenate synthetase from Bacillus velezensis (strain DSM 23117 / BGSC 10A6 / LMG 26770 / FZB42) (Bacillus amyloliquefaciens subsp. plantarum).